A 203-amino-acid chain; its full sequence is MRYPWFRLAIFVLGCLFPLWWFYEAAMGLLGPDPGKIMMDRLGLGALVFLLITLSMTPLQRLTGWSGWIVVRRQLGLWCFAYIVLHLVSYLVFILGLDWGQFGVELRKRPYIIVGALGFLGLLALAVTSNRYSQRRLGARWKKLHRLVYVILGLGLLHFLWIVRSDLKEWAIYAGIGGVLLVMRIPPVWRRVPRLMGGRGRAA.

6 helical membrane passes run 10 to 30 (IFVLGCLFPLWWFYEAAMGLL), 37 to 57 (IMMDRLGLGALVFLLITLSMT), 75 to 95 (LGLWCFAYIVLHLVSYLVFIL), 110 to 130 (PYIIVGALGFLGLLALAVTSN), 147 to 167 (LVYVILGLGLLHFLWIVRSDL), and 169 to 189 (EWAIYAGIGGVLLVMRIPPVW).

Belongs to the MsrQ family. In terms of assembly, heterodimer of a catalytic subunit (MsrP) and a heme-binding subunit (MsrQ). FMN is required as a cofactor. Requires heme b as cofactor.

The protein resides in the cell inner membrane. Functionally, part of the MsrPQ system that repairs oxidized periplasmic proteins containing methionine sulfoxide residues (Met-O), using respiratory chain electrons. Thus protects these proteins from oxidative-stress damage caused by reactive species of oxygen and chlorine generated by the host defense mechanisms. MsrPQ is essential for the maintenance of envelope integrity under bleach stress, rescuing a wide series of structurally unrelated periplasmic proteins from methionine oxidation. MsrQ provides electrons for reduction to the reductase catalytic subunit MsrP, using the quinone pool of the respiratory chain. The polypeptide is Protein-methionine-sulfoxide reductase heme-binding subunit MsrQ (Pseudomonas entomophila (strain L48)).